The primary structure comprises 520 residues: Maturase K (520 aa).

The protein belongs to the intron maturase 2 family. MatK subfamily.

The protein resides in the plastid. It localises to the chloroplast. In terms of biological role, usually encoded in the trnK tRNA gene intron. Probably assists in splicing its own and other chloroplast group II introns. This Cycas taitungensis (Prince sago) protein is Maturase K.